The following is a 38-amino-acid chain: Photosystem II reaction center protein L (38 aa).

The chain crosses the membrane as a helical span at residues 17-37 (SLYWGLLLIFVLAVLFSSYIF).

It belongs to the PsbL family. As to quaternary structure, PSII is composed of 1 copy each of membrane proteins PsbA, PsbB, PsbC, PsbD, PsbE, PsbF, PsbH, PsbI, PsbJ, PsbK, PsbL, PsbM, PsbT, PsbX, PsbY, PsbZ, Psb30/Ycf12, at least 3 peripheral proteins of the oxygen-evolving complex and a large number of cofactors. It forms dimeric complexes.

It localises to the plastid. The protein resides in the chloroplast thylakoid membrane. Functionally, one of the components of the core complex of photosystem II (PSII). PSII is a light-driven water:plastoquinone oxidoreductase that uses light energy to abstract electrons from H(2)O, generating O(2) and a proton gradient subsequently used for ATP formation. It consists of a core antenna complex that captures photons, and an electron transfer chain that converts photonic excitation into a charge separation. This subunit is found at the monomer-monomer interface and is required for correct PSII assembly and/or dimerization. This chain is Photosystem II reaction center protein L, found in Tetradesmus obliquus (Green alga).